We begin with the raw amino-acid sequence, 738 residues long: Polyribonucleotide nucleotidyltransferase (738 aa).

The Mg(2+) site is built by aspartate 514 and aspartate 520. One can recognise a KH domain in the interval 580 to 639 (PRIITVKIPVDKIGEVIGPKGKMINQIQEDTGAEITIEDDGTIYIGAQVGSQAEAARATI). Positions 651–723 (GERYLGTVVK…SRGKLSLIPV (73 aa)) constitute an S1 motif domain.

Belongs to the polyribonucleotide nucleotidyltransferase family. Requires Mg(2+) as cofactor.

It is found in the cytoplasm. The catalysed reaction is RNA(n+1) + phosphate = RNA(n) + a ribonucleoside 5'-diphosphate. Its function is as follows. Involved in mRNA degradation. Catalyzes the phosphorolysis of single-stranded polyribonucleotides processively in the 3'- to 5'-direction. The chain is Polyribonucleotide nucleotidyltransferase from Streptomyces avermitilis (strain ATCC 31267 / DSM 46492 / JCM 5070 / NBRC 14893 / NCIMB 12804 / NRRL 8165 / MA-4680).